The primary structure comprises 240 residues: NADH-quinone oxidoreductase subunit I 2 (240 aa).

2 4Fe-4S ferredoxin-type domains span residues threonine 57 to histidine 86 and aspartate 97 to aspartate 126. Positions 66, 69, 72, 76, 106, 109, 112, and 116 each coordinate [4Fe-4S] cluster. Residues isoleucine 185–proline 240 are disordered. The segment covering tyrosine 198–glutamate 211 has biased composition (basic and acidic residues). The span at glutamate 215–glycine 230 shows a compositional bias: low complexity.

The protein belongs to the complex I 23 kDa subunit family. In terms of assembly, NDH-1 is composed of 14 different subunits. Subunits NuoA, H, J, K, L, M, N constitute the membrane sector of the complex. [4Fe-4S] cluster serves as cofactor.

The protein localises to the cell membrane. The catalysed reaction is a quinone + NADH + 5 H(+)(in) = a quinol + NAD(+) + 4 H(+)(out). Its function is as follows. NDH-1 shuttles electrons from NADH, via FMN and iron-sulfur (Fe-S) centers, to quinones in the respiratory chain. The immediate electron acceptor for the enzyme in this species is believed to be ubiquinone. Couples the redox reaction to proton translocation (for every two electrons transferred, four hydrogen ions are translocated across the cytoplasmic membrane), and thus conserves the redox energy in a proton gradient. The protein is NADH-quinone oxidoreductase subunit I 2 of Symbiobacterium thermophilum (strain DSM 24528 / JCM 14929 / IAM 14863 / T).